Reading from the N-terminus, the 130-residue chain is Large ribosomal subunit protein bL21 (130 aa).

A disordered region spans residues 103–130 (AGGKTSKAEPRKTRKAEPAAESAPAAAE). The segment covering 108-120 (SKAEPRKTRKAEP) has biased composition (basic and acidic residues). Residues 121 to 130 (AAESAPAAAE) are compositionally biased toward low complexity.

The protein belongs to the bacterial ribosomal protein bL21 family. Part of the 50S ribosomal subunit. Contacts protein L20.

This protein binds to 23S rRNA in the presence of protein L20. The sequence is that of Large ribosomal subunit protein bL21 from Methylorubrum extorquens (strain CM4 / NCIMB 13688) (Methylobacterium extorquens).